We begin with the raw amino-acid sequence, 601 residues long: DNA topoisomerase I, mitochondrial (601 aa).

The transit peptide at 1-50 directs the protein to the mitochondrion; that stretch reads MRVVRLLRLRAALTLLGEVPRRPASRGVPGSRRTQKGSGARWEKEKHEDG. A disordered region spans residues 22 to 48; that stretch reads RPASRGVPGSRRTQKGSGARWEKEKHE. Interaction with DNA regions lie at residues 261-262, 324-329, and 421-423; these read KY, RAGNEK, and TAK. Positions 268-601 constitute a Topo IB-type catalytic domain; that stretch reads CSKLKGETAW…LAMAGEDFEF (334 aa). Y559 serves as the catalytic O-(3'-phospho-DNA)-tyrosine intermediate.

This sequence belongs to the type IB topoisomerase family. Ca(2+) is required as a cofactor. Requires Mg(2+) as cofactor. As to expression, ubiquitous; highest in skeletal muscle, heart, brain and fetal liver.

The protein localises to the mitochondrion. It carries out the reaction ATP-independent breakage of single-stranded DNA, followed by passage and rejoining.. Its function is as follows. Releases the supercoiling and torsional tension of DNA introduced during duplication of mitochondrial DNA by transiently cleaving and rejoining one strand of the DNA duplex. Introduces a single-strand break via transesterification at a target site in duplex DNA. The scissile phosphodiester is attacked by the catalytic tyrosine of the enzyme, resulting in the formation of a DNA-(3'-phosphotyrosyl)-enzyme intermediate and the expulsion of a 5'-OH DNA strand. The free DNA strand then rotates around the intact phosphodiester bond on the opposing strand, thus removing DNA supercoils. Finally, in the religation step, the DNA 5'-OH attacks the covalent intermediate to expel the active-site tyrosine and restore the DNA phosphodiester backbone. The protein is DNA topoisomerase I, mitochondrial (TOP1MT) of Homo sapiens (Human).